Here is a 380-residue protein sequence, read N- to C-terminus: Anthranilate phosphoribosyltransferase (380 aa).

Glycine 109, asparagine 119, serine 121, threonine 122, lysine 142, serine 144, and serine 146 together coordinate 5-phospho-alpha-D-ribose 1-diphosphate. Mg(2+)-binding residues include aspartate 258 and glutamate 259.

It belongs to the anthranilate phosphoribosyltransferase family. In terms of assembly, homodimer. The cofactor is Mg(2+).

It carries out the reaction N-(5-phospho-beta-D-ribosyl)anthranilate + diphosphate = 5-phospho-alpha-D-ribose 1-diphosphate + anthranilate. It participates in amino-acid biosynthesis; L-tryptophan biosynthesis; L-tryptophan from chorismate: step 2/5. Catalyzes the transfer of the phosphoribosyl group of 5-phosphorylribose-1-pyrophosphate (PRPP) to anthranilate to yield N-(5'-phosphoribosyl)-anthranilate (PRA), the second step in tryptophan biosynthesis. This Saccharomyces cerevisiae (strain ATCC 204508 / S288c) (Baker's yeast) protein is Anthranilate phosphoribosyltransferase.